We begin with the raw amino-acid sequence, 895 residues long: Androgen receptor (895 aa).

The tract at residues methionine 1 to lysine 533 is modulating. The segment at methionine 1–alanine 562 is interaction with ZNF318. Disordered regions lie at residues valine 33 to leucine 150 and glutamine 175 to glycine 211. Composition is skewed to low complexity over residues alanine 44–glutamine 81 and glutamine 175–alanine 200. Position 65 is a phosphoserine; by CDK9 (serine 65). Serine 79 is subject to Phosphoserine. Polar residues predominate over residues proline 201–glycine 211. Residue tyrosine 208 is modified to Phosphotyrosine; by CSK. Phosphoserine is present on serine 241. Tyrosine 252 carries the post-translational modification Phosphotyrosine; by CSK and TNK2. Residues tyrosine 292, tyrosine 331, tyrosine 342, and tyrosine 347 each carry the phosphotyrosine; by CSK modification. The residue at position 348 (tyrosine 348) is a Phosphotyrosine; by CSK and TNK2. Lysine 371 participates in a covalent cross-link: Glycyl lysine isopeptide (Lys-Gly) (interchain with G-Cter in SUMO). At tyrosine 378 the chain carries Phosphotyrosine; by CSK. A Glycyl lysine isopeptide (Lys-Gly) (interchain with G-Cter in SUMO) cross-link involves residue lysine 496. 2 positions are modified to phosphotyrosine; by CSK: tyrosine 510 and tyrosine 527. The segment at tyrosine 527 to threonine 894 is interaction with LPXN. The nuclear receptor DNA-binding region spans threonine 534–leucine 607. 2 NR C4-type zinc fingers span residues cysteine 535–cysteine 555 and cysteine 571–cysteine 595. The interaction with HIPK3 stretch occupies residues tyrosine 547–valine 637. Positions glutamine 567–threonine 894 are interaction with CCAR1. The segment at methionine 600–threonine 894 is interaction with KAT7. At serine 626 the chain carries Phosphoserine; by STK4/MST1. Residues glutamate 644 to isoleucine 875 enclose the NR LBD domain. 17beta-hydroxy-5alpha-androstan-3-one contacts are provided by asparagine 681 and arginine 728. Glycyl lysine isopeptide (Lys-Gly) (interchain with G-Cter in ubiquitin) cross-links involve residues lysine 821 and lysine 823. Position 853 (threonine 853) interacts with 17beta-hydroxy-5alpha-androstan-3-one. Tyrosine 891 is subject to Phosphotyrosine; by CSK.

This sequence belongs to the nuclear hormone receptor family. NR3 subfamily. Binds DNA as a homodimer. Part of a ternary complex containing AR, EFCAB6/DJBP and PARK7. Interacts with HIPK3 and NR0B2 in the presence of androgen. The ligand binding domain interacts with KAT7/HBO1 in the presence of dihydrotestosterone. Interacts with EFCAB6/DJBP, PQBP1, RANBP9, RBAK, SPDEF, SRA1, TGFB1I1 and RREB1. Interacts with ZMIZ1/ZIMP10 and ZMIZ2/ZMIP7 which both enhance its transactivation activity. Interacts with SLC30A9 and RAD54L2/ARIP4. Interacts with MACROD1 (via macro domain). Interacts via the ligand-binding domain with LXXLL and FXXLF motifs from NCOA1, NCOA2, NCOA3 and MAGEA11. Interacts (via nuclear receptor DNA binding domain and nuclear receptor ligand binding domain) with NCOA4. The AR N-terminal poly-Gln region binds Ran resulting in enhancement of AR-mediated transactivation. Ran-binding decreases as the poly-Gln length increases. Interacts with HIP1 (via coiled coil domain). Interacts (via ligand-binding domain) with TRIM68. Interacts with TNK2. Interacts with USP26. Interacts with RNF6. Interacts (regulated by RNF6 probably through polyubiquitination) with RNF14; regulates AR transcriptional activity. Interacts with PRMT2 and TRIM24. Interacts with RACK1. Interacts with RANBP10; this interaction enhances dihydrotestosterone-induced AR transcriptional activity. Interacts with PRPF6 in a hormone-independent way; this interaction enhances dihydrotestosterone-induced AR transcriptional activity. Interacts with STK4/MST1. Interacts with ZIPK/DAPK3. Interacts with LPXN. Interacts with MAK. Part of a complex containing AR, MAK and NCOA3. Interacts with CRY1. Interacts with CCAR1 and GATA2. Interacts with ZNF318. Interacts with BUD31. Interacts with ARID4A. Interacts with ARID4B. Interacts (via NR LBD domain) with ZBTB7A; the interaction is direct and androgen-dependent. Interacts with NCOR1. Interacts with NCOR2. Interacts with CRY2 in a ligand-dependent manner. In terms of processing, phosphorylated in prostate cancer cells in response to several growth factors including EGF. Phosphorylation is induced by c-Src kinase (CSK). Tyr-510 is one of the major phosphorylation sites and an increase in phosphorylation and Src kinase activity is associated with prostate cancer progression. Phosphorylation by TNK2 enhances the DNA-binding and transcriptional activity. Phosphorylation at Ser-65 by CDK9 regulates AR promoter selectivity and cell growth. Sumoylated on Lys-371 (major) and Lys-496. Ubiquitinated. Deubiquitinated by USP26. 'Lys-6' and 'Lys-27'-linked polyubiquitination by RNF6 modulates AR transcriptional activity and specificity. Post-translationally, palmitoylated by ZDHHC7 and ZDHHC21. Palmitoylation is required for plasma membrane targeting and for rapid intracellular signaling via ERK and AKT kinases and cAMP generation.

It localises to the nucleus. The protein localises to the cytoplasm. Steroid hormone receptors are ligand-activated transcription factors that regulate eukaryotic gene expression and affect cellular proliferation and differentiation in target tissues. Transcription factor activity is modulated by bound coactivator and corepressor proteins like ZBTB7A that recruits NCOR1 and NCOR2 to the androgen response elements/ARE on target genes, negatively regulating androgen receptor signaling and androgen-induced cell proliferation. Transcription activation is also down-regulated by NR0B2. Activated, but not phosphorylated, by HIPK3 and ZIPK/DAPK3. The protein is Androgen receptor (AR) of Macaca fascicularis (Crab-eating macaque).